Here is a 519-residue protein sequence, read N- to C-terminus: F-box only protein 31-A (519 aa).

The interval 11–37 (GQSGGCRRRQQRKGAGNDPELEDEEEE) is disordered. Positions 54–100 (PHSLLLLPPEILVEIFSLLPGTELGGLAQVCSKFRQILTTDTIWKRR) constitute an F-box domain. Positions 196, 204, 220, and 226 each coordinate Zn(2+). Positions 369–390 (REQRQTDNEEDDGRGAGPDKAE) are enriched in basic and acidic residues. Residues 369 to 424 (REQRQTDNEEDDGRGAGPDKAEPAQQPAPLLRPPNEDANGADDDGDGGEQKPPNVQ) are disordered.

It belongs to the FBXO31 family. Part of a SCF (SKP1-cullin-F-box) protein ligase complex SCF(FBXO31).

Its subcellular location is the cytoplasm. Its pathway is protein modification; protein ubiquitination. Its function is as follows. Substrate-recognition component of the SCF(FBXO31) protein ligase complex, which specifically mediates the ubiquitination of proteins amidated at their C-terminus in response to oxidative stress, leading to their degradation by the proteasome. Fbxo31 specifically recognizes and binds C-terminal peptides bearing an amide: C-terminal amidation in response to oxidative stress takes place following protein fragmentation. The SCF(FBXO31) also plays a role in G1 arrest following DNA damage by mediating ubiquitination of phosphorylated cyclin-D1 (ccnd1), promoting its degradation by the proteasome, resulting in G1 arrest. The SCF(FBXO31) complex is however not a major regulator of ccnd1 stability during the G1/S transition. The protein is F-box only protein 31-A (fbxo31-a) of Xenopus laevis (African clawed frog).